A 405-amino-acid polypeptide reads, in one-letter code: Phosphoglycerate kinase (405 aa).

Substrate-binding positions include Asp-24–Asn-26, Arg-40, His-63–Arg-66, Arg-122, and Arg-162. Residues Lys-212, Glu-331, and Gly-361–Ser-364 each bind ATP.

This sequence belongs to the phosphoglycerate kinase family. In terms of assembly, monomer.

It localises to the cytoplasm. The catalysed reaction is (2R)-3-phosphoglycerate + ATP = (2R)-3-phospho-glyceroyl phosphate + ADP. It functions in the pathway carbohydrate degradation; glycolysis; pyruvate from D-glyceraldehyde 3-phosphate: step 2/5. This chain is Phosphoglycerate kinase (pgk), found in Corynebacterium glutamicum (strain ATCC 13032 / DSM 20300 / JCM 1318 / BCRC 11384 / CCUG 27702 / LMG 3730 / NBRC 12168 / NCIMB 10025 / NRRL B-2784 / 534).